Here is a 64-residue protein sequence, read N- to C-terminus: Alpha-mammal toxin BmK-M8 (64 aa).

Residues 2-64 (RDAYIADSEN…ERIKEPGKCG (63 aa)) enclose the LCN-type CS-alpha/beta domain. Cystine bridges form between Cys12–Cys63, Cys16–Cys36, Cys22–Cys46, and Cys26–Cys48.

This sequence belongs to the long (4 C-C) scorpion toxin superfamily. Sodium channel inhibitor family. Alpha subfamily. As to expression, expressed by the venom gland.

It is found in the secreted. Functionally, alpha toxins bind voltage-independently at site-3 of sodium channels (Nav) and inhibit the inactivation of the activated channels, thereby blocking neuronal transmission. This acidic toxin has a weak toxicity and is active against mammals. The sequence is that of Alpha-mammal toxin BmK-M8 from Olivierus martensii (Manchurian scorpion).